Here is a 120-residue protein sequence, read N- to C-terminus: Cytochrome c-550 (120 aa).

A helical transmembrane segment spans residues 5–25; the sequence is PLIPFLLIAVLGIGLTFFLSV. Topologically, residues 26–120 are periplasmic; it reads KGLDDSREIA…DMAEWVSKIK (95 aa). Residues Cys-60, Cys-63, His-64, and Met-99 each coordinate heme c.

In terms of processing, binds 1 heme c group covalently per subunit.

Its subcellular location is the cell membrane. Functionally, not essential for growth on minimal or rich media. This Bacillus subtilis (strain 168) protein is Cytochrome c-550 (cccA).